Consider the following 425-residue polypeptide: Glucose-1-phosphate adenylyltransferase (425 aa).

Residues Y110, G175, 190–191 (EK), and S208 each bind alpha-D-glucose 1-phosphate.

This sequence belongs to the bacterial/plant glucose-1-phosphate adenylyltransferase family. Homotetramer.

It carries out the reaction alpha-D-glucose 1-phosphate + ATP + H(+) = ADP-alpha-D-glucose + diphosphate. The protein operates within glycan biosynthesis; glycogen biosynthesis. Functionally, involved in the biosynthesis of ADP-glucose, a building block required for the elongation reactions to produce glycogen. Catalyzes the reaction between ATP and alpha-D-glucose 1-phosphate (G1P) to produce pyrophosphate and ADP-Glc. This is Glucose-1-phosphate adenylyltransferase from Nitrosospira multiformis (strain ATCC 25196 / NCIMB 11849 / C 71).